A 547-amino-acid polypeptide reads, in one-letter code: ATP synthase subunit alpha (547 aa).

Glycine 172–threonine 179 contacts ATP.

Belongs to the ATPase alpha/beta chains family. F-type ATPases have 2 components, CF(1) - the catalytic core - and CF(0) - the membrane proton channel. CF(1) has five subunits: alpha(3), beta(3), gamma(1), delta(1), epsilon(1). CF(0) has three main subunits: a(1), b(2) and c(9-12). The alpha and beta chains form an alternating ring which encloses part of the gamma chain. CF(1) is attached to CF(0) by a central stalk formed by the gamma and epsilon chains, while a peripheral stalk is formed by the delta and b chains.

The protein localises to the cell membrane. The enzyme catalyses ATP + H2O + 4 H(+)(in) = ADP + phosphate + 5 H(+)(out). Produces ATP from ADP in the presence of a proton gradient across the membrane. The alpha chain is a regulatory subunit. This is ATP synthase subunit alpha from Corynebacterium glutamicum (strain R).